The following is a 72-amino-acid chain: ATP synthase protein 8 (72 aa).

A helical membrane pass occupies residues 16–36 (WTLIALFLLFSFLVVSVLPAV).

The protein belongs to the ATPase protein 8 family. As to quaternary structure, F-type ATPases have 2 components, CF(1) - the catalytic core - and CF(0) - the membrane proton channel.

It is found in the mitochondrion membrane. In terms of biological role, mitochondrial membrane ATP synthase (F(1)F(0) ATP synthase or Complex V) produces ATP from ADP in the presence of a proton gradient across the membrane which is generated by electron transport complexes of the respiratory chain. F-type ATPases consist of two structural domains, F(1) - containing the extramembraneous catalytic core and F(0) - containing the membrane proton channel, linked together by a central stalk and a peripheral stalk. During catalysis, ATP synthesis in the catalytic domain of F(1) is coupled via a rotary mechanism of the central stalk subunits to proton translocation. Part of the complex F(0) domain. Minor subunit located with subunit a in the membrane. The chain is ATP synthase protein 8 (MTATP8) from Metridium senile (Brown sea anemone).